Here is a 566-residue protein sequence, read N- to C-terminus: Protein pacG (566 aa).

A DNA-binding region (NDT80) is located at residues 79–326 (TSFDPPPPAE…RSPRNFQSRK (248 aa)). Disordered regions lie at residues 314–422 (VRGR…EAHR) and 448–470 (DSRP…DSGR). Over residues 333-349 (SAAASRKNAQAAAASNN) the composition is skewed to low complexity. Composition is skewed to polar residues over residues 365–391 (VKSS…ATNS), 403–413 (HSSVYSQSSPE), and 452–466 (HTSF…SLSV).

The protein resides in the nucleus. It is found in the cytoplasm. Transcription factor that acts as a positive regulator of nonrepressible acid phosphatase activity. Is a major regulator of responses to nitrogen and carbon starvation and is essential for the expression of genes involved in vegetative incompatibility (like pin-c, het-6, and tol). Vegetative incompatibility is a non-self-recognition system ubiquitous in filamentous fungi which results in programmed cell death. This Emericella nidulans (strain FGSC A4 / ATCC 38163 / CBS 112.46 / NRRL 194 / M139) (Aspergillus nidulans) protein is Protein pacG (pacG).